The primary structure comprises 260 residues: Acetylglutamate kinase (260 aa).

Substrate is bound by residues 45-46 (GG), arginine 67, and asparagine 159.

It belongs to the acetylglutamate kinase family. ArgB subfamily.

It localises to the cytoplasm. The enzyme catalyses N-acetyl-L-glutamate + ATP = N-acetyl-L-glutamyl 5-phosphate + ADP. Its pathway is amino-acid biosynthesis; L-arginine biosynthesis; N(2)-acetyl-L-ornithine from L-glutamate: step 2/4. In terms of biological role, catalyzes the ATP-dependent phosphorylation of N-acetyl-L-glutamate. This is Acetylglutamate kinase from Colwellia psychrerythraea (strain 34H / ATCC BAA-681) (Vibrio psychroerythus).